We begin with the raw amino-acid sequence, 231 residues long: MTYRRIPLYLSCLFLLALSGCNSKRPPLVEIPEPLEELQTMSPATRQAGSLWDSNQNSLFSDRKASNVGDIVTVLIEEKSSASKNASTKTGKDSSIGASIPNLFGLEKSSIIANNHIDMNNLIGASFKNDFKGAGSTSRSGTLSAALSTQVIVKYPNGQLKIRGGKEVMVNNEVQVIYLTGIIRPVDITAANTINSDKILNARISYTGKGALGDKQEPGWLTRSLDHVWPF.

The N-terminal stretch at 1–20 (MTYRRIPLYLSCLFLLALSG) is a signal peptide. Residue Cys-21 is the site of N-palmitoyl cysteine attachment. Cys-21 carries S-diacylglycerol cysteine lipidation.

Belongs to the FlgH family. In terms of assembly, the basal body constitutes a major portion of the flagellar organelle and consists of four rings (L,P,S, and M) mounted on a central rod.

The protein resides in the cell outer membrane. It localises to the bacterial flagellum basal body. Assembles around the rod to form the L-ring and probably protects the motor/basal body from shearing forces during rotation. This Desulfotalea psychrophila (strain LSv54 / DSM 12343) protein is Flagellar L-ring protein.